A 221-amino-acid chain; its full sequence is Carbonic anhydrase (221 aa).

Positions 38, 40, 99, and 102 each coordinate Zn(2+).

This sequence belongs to the beta-class carbonic anhydrase family. Requires Zn(2+) as cofactor.

It carries out the reaction hydrogencarbonate + H(+) = CO2 + H2O. The polypeptide is Carbonic anhydrase (cynT) (Helicobacter pylori (strain J99 / ATCC 700824) (Campylobacter pylori J99)).